The chain runs to 388 residues: Lipid-A-disaccharide synthase (388 aa).

It belongs to the LpxB family.

The enzyme catalyses a lipid X + a UDP-2-N,3-O-bis[(3R)-3-hydroxyacyl]-alpha-D-glucosamine = a lipid A disaccharide + UDP + H(+). It participates in bacterial outer membrane biogenesis; LPS lipid A biosynthesis. Functionally, condensation of UDP-2,3-diacylglucosamine and 2,3-diacylglucosamine-1-phosphate to form lipid A disaccharide, a precursor of lipid A, a phosphorylated glycolipid that anchors the lipopolysaccharide to the outer membrane of the cell. This is Lipid-A-disaccharide synthase from Burkholderia mallei (strain NCTC 10247).